The following is a 133-amino-acid chain: Probable mitochondrial pyruvate carrier 2 (133 aa).

The next 3 helical transmembrane spans lie at 40-57 (VFFW…AGLA), 73-91 (ALFA…ITPI), and 100-116 (FFVM…IAHY).

Belongs to the mitochondrial pyruvate carrier (MPC) (TC 2.A.105) family.

The protein resides in the mitochondrion inner membrane. In terms of biological role, may mediate the uptake of pyruvate into mitochondria. The protein is Probable mitochondrial pyruvate carrier 2 of Caenorhabditis elegans.